The following is a 333-amino-acid chain: Protein-methionine-sulfoxide reductase catalytic subunit MsrP (333 aa).

A signal peptide (tat-type signal) is located at residues 1 to 43 (MHKHRKPTEADVTPESLFYQRRRVLKALGISAAALSLPLSAQA). Residues asparagine 87, 90–91 (YE), cysteine 145, threonine 180, asparagine 232, arginine 237, and 248–250 (NIK) each bind Mo-molybdopterin.

The protein belongs to the MsrP family. In terms of assembly, heterodimer of a catalytic subunit (MsrP) and a heme-binding subunit (MsrQ). Mo-molybdopterin is required as a cofactor. Post-translationally, predicted to be exported by the Tat system. The position of the signal peptide cleavage has not been experimentally proven.

Its subcellular location is the periplasm. The catalysed reaction is L-methionyl-[protein] + a quinone + H2O = L-methionyl-(S)-S-oxide-[protein] + a quinol. The enzyme catalyses L-methionyl-[protein] + a quinone + H2O = L-methionyl-(R)-S-oxide-[protein] + a quinol. Its function is as follows. Part of the MsrPQ system that repairs oxidized periplasmic proteins containing methionine sulfoxide residues (Met-O), using respiratory chain electrons. Thus protects these proteins from oxidative-stress damage caused by reactive species of oxygen and chlorine generated by the host defense mechanisms. MsrPQ is essential for the maintenance of envelope integrity under bleach stress, rescuing a wide series of structurally unrelated periplasmic proteins from methionine oxidation. The catalytic subunit MsrP is non-stereospecific, being able to reduce both (R-) and (S-) diastereoisomers of methionine sulfoxide. The protein is Protein-methionine-sulfoxide reductase catalytic subunit MsrP of Pectobacterium atrosepticum (strain SCRI 1043 / ATCC BAA-672) (Erwinia carotovora subsp. atroseptica).